We begin with the raw amino-acid sequence, 223 residues long: Phosphoribosylformylglycinamidine synthase subunit PurQ (223 aa).

The Glutamine amidotransferase type-1 domain occupies 3–223 (SAVVQLPGLN…FASALDVIAA (221 aa)). Cys86 serves as the catalytic Nucleophile. Active-site residues include His196 and Glu198.

As to quaternary structure, part of the FGAM synthase complex composed of 1 PurL, 1 PurQ and 2 PurS subunits.

The protein resides in the cytoplasm. The enzyme catalyses N(2)-formyl-N(1)-(5-phospho-beta-D-ribosyl)glycinamide + L-glutamine + ATP + H2O = 2-formamido-N(1)-(5-O-phospho-beta-D-ribosyl)acetamidine + L-glutamate + ADP + phosphate + H(+). It catalyses the reaction L-glutamine + H2O = L-glutamate + NH4(+). It participates in purine metabolism; IMP biosynthesis via de novo pathway; 5-amino-1-(5-phospho-D-ribosyl)imidazole from N(2)-formyl-N(1)-(5-phospho-D-ribosyl)glycinamide: step 1/2. In terms of biological role, part of the phosphoribosylformylglycinamidine synthase complex involved in the purines biosynthetic pathway. Catalyzes the ATP-dependent conversion of formylglycinamide ribonucleotide (FGAR) and glutamine to yield formylglycinamidine ribonucleotide (FGAM) and glutamate. The FGAM synthase complex is composed of three subunits. PurQ produces an ammonia molecule by converting glutamine to glutamate. PurL transfers the ammonia molecule to FGAR to form FGAM in an ATP-dependent manner. PurS interacts with PurQ and PurL and is thought to assist in the transfer of the ammonia molecule from PurQ to PurL. This is Phosphoribosylformylglycinamidine synthase subunit PurQ from Rhizobium meliloti (strain 1021) (Ensifer meliloti).